The primary structure comprises 103 residues: Small ribosomal subunit protein cS23 (103 aa).

The protein belongs to the chloroplast-specific ribosomal protein cS23 family. In terms of assembly, part of the 30S ribosomal subunit.

It localises to the plastid. The protein resides in the chloroplast. Its function is as follows. Probably a ribosomal protein or a ribosome-associated protein. This is Small ribosomal subunit protein cS23 (ycf65) from Euglena granulata.